Consider the following 117-residue polypeptide: MISIILVMIGGGLGAIARSAITDYFNHKFTSKLPIATLIVNLVGSFLIGLTIGLSISISWFPAFFVTGFLGGLTTFSTLAKELTLMMTPKFNINLFLNYSLLQFIIGFIACYIGYHI.

2 helical membrane-spanning segments follow: residues 1-21 (MISI…RSAI) and 46-66 (FLIG…AFFV). Gly71 and Thr74 together coordinate Na(+). The helical transmembrane segment at 95 to 115 (LFLNYSLLQFIIGFIACYIGY) threads the bilayer.

It belongs to the fluoride channel Fluc/FEX (TC 1.A.43) family.

Its subcellular location is the cell membrane. The enzyme catalyses fluoride(in) = fluoride(out). With respect to regulation, na(+) is not transported, but it plays an essential structural role and its presence is essential for fluoride channel function. In terms of biological role, fluoride-specific ion channel. Important for reducing fluoride concentration in the cell, thus reducing its toxicity. In Staphylococcus aureus (strain MRSA252), this protein is Fluoride-specific ion channel FluC 2.